The primary structure comprises 117 residues: NADH-ubiquinone oxidoreductase chain 3 (117 aa).

The next 3 helical transmembrane spans lie at 1 to 21 (MLMLSTMTLIIFIITIVVMML), 58 to 78 (FLIAIIFLIFDVEIALLLPMI), and 86 to 106 (LMNWTITSLFFIFILLIGLYH).

Belongs to the complex I subunit 3 family.

It localises to the mitochondrion membrane. The enzyme catalyses a ubiquinone + NADH + 5 H(+)(in) = a ubiquinol + NAD(+) + 4 H(+)(out). Core subunit of the mitochondrial membrane respiratory chain NADH dehydrogenase (Complex I) that is believed to belong to the minimal assembly required for catalysis. Complex I functions in the transfer of electrons from NADH to the respiratory chain. The immediate electron acceptor for the enzyme is believed to be ubiquinone. The sequence is that of NADH-ubiquinone oxidoreductase chain 3 (mt:ND3) from Anopheles gambiae (African malaria mosquito).